Here is a 997-residue protein sequence, read N- to C-terminus: Glutamate [NMDA] receptor subunit 1 (997 aa).

The first 26 residues, 1–26, serve as a signal peptide directing secretion; the sequence is MAMAEFVFCRPLFGLAIVLLVAPIDA. Residues 27–573 are Extracellular-facing; it reads AQRHTASDNP…TLVSFLQPFS (547 aa). 7 N-linked (GlcNAc...) asparagine glycosylation sites follow: Asn-258, Asn-314, Asn-345, Asn-397, Asn-454, Asn-481, and Asn-501. Residues 530–532 and Arg-537 each bind glycine; that span reads PLT. Residues 574–594 traverse the membrane as a helical segment; that stretch reads NTLWILVMVSVHVVALVLYLL. The Cytoplasmic portion of the chain corresponds to 595 to 651; it reads DRFSPFGRFKLSHSDSNEEKALNLSSAVWFAWGVLLNSGIGEGTPRSFSARVLGMVW. A helical transmembrane segment spans residues 652–672; sequence AGFAMIIVASYTANLAAFLVL. Residues 673–831 are Extracellular-facing; that stretch reads ERPKTKLSGI…KTPNTLGLKN (159 aa). The N-linked (GlcNAc...) asparagine glycan is linked to Asn-693. Glycine-binding residues include Ser-703 and Asp-747. The helical transmembrane segment at 832-852 threads the bilayer; that stretch reads MAGVFILVGVGIAGGVGLIII. The Cytoplasmic segment spans residues 853–997; sequence EVIYKKHQVK…YTSDVSHLVV (145 aa). The segment at 970–997 is disordered; it reads LGKTRPQQSVLPPRYSPGYTSDVSHLVV. Residues 987-997 show a composition bias toward polar residues; the sequence is GYTSDVSHLVV.

The protein belongs to the glutamate-gated ion channel (TC 1.A.10.1) family. As to quaternary structure, forms a heteromeric NMDA channel with Nmdar2. Highly expressed in adult heads: in the brain and ring gland. Low expression throughout the entire brain is also seen. Higher expression levels were observed in some scattered cell bodies and part of their fibers, including those from several pairs of DPM (dorsal-posterior-medial) neurons surrounding the calyx, DAL (dorsal-anterior-lateral) and DPL (dorsal-posterior-lateral) neurons in the lateral protocerebrum (LP), VAL (ventral-anterior-lateral) neurons in the anterior protocerebrum, and two pairs of VP (ventral-posterior) neurons in the posterior protocerebrum. Many cell bodies in the optic lobes show preferential expression. Punctuate expression is notably detected in many brain regions including the superior medial protocerebrum. Weakly expressed in the antennal lobes and central complex.

It is found in the cell membrane. Its subcellular location is the postsynaptic cell membrane. The protein resides in the postsynaptic density. NMDA receptor subtype of glutamate-gated ion channels with high calcium permeability and voltage-dependent sensitivity to magnesium. Mediated by glycine. This protein plays a key role in synaptic plasticity, synaptogenesis, excitotoxicity, memory acquisition and learning. It mediates neuronal functions in glutamate neurotransmission. Is involved in the cell surface targeting of NMDA receptors. Plays a role in associative learning and in long-term memory consolidation. This chain is Glutamate [NMDA] receptor subunit 1, found in Drosophila melanogaster (Fruit fly).